A 369-amino-acid chain; its full sequence is Sulfate permease 2, chloroplastic (369 aa).

Residues 1 to 21 (MASTTLLQPALGLPSRVGPRS) are disordered. The N-terminal 82 residues, 1–82 (MASTTLLQPA…QQSRGDLLVS (82 aa)), are a transit peptide targeting the chloroplast. 5 helical membrane-spanning segments follow: residues 110 to 130 (VGVAAAYIGLVVLVPFLNVFV), 156 to 176 (TLMLAFVTVPLNTVFGTVAAI), 187 to 207 (VFLMSLLDLPFSISPVVTGLM), 229 to 249 (VVFAFTGMALATMFVTLPFVV), and 335 to 355 (TEAAFAAAVLLSALALGTLWI). The region spanning 153–356 (LKMTLMLAFV…ALALGTLWIK (204 aa)) is the ABC transmembrane type-1 domain.

This sequence belongs to the ATP-binding cassette (ABC) (TC 3.A.1) superfamily. Part of the chloroplast sulfate permease holocomplex. May form a heterodimer with SLUP1.

The protein resides in the plastid. Its subcellular location is the chloroplast membrane. In terms of biological role, part of the ABC-type chloroplast envelope-localized sulfate transporter. This is Sulfate permease 2, chloroplastic (SULP2) from Chlamydomonas reinhardtii (Chlamydomonas smithii).